A 335-amino-acid polypeptide reads, in one-letter code: Ornithine carbamoyltransferase (335 aa).

Residues 56–59 (STRT), Q83, R107, and 134–137 (HPTQ) each bind carbamoyl phosphate. L-ornithine-binding positions include N168, D232, and 236-237 (SM). Carbamoyl phosphate is bound by residues 274–275 (CL) and R320.

It belongs to the aspartate/ornithine carbamoyltransferase superfamily. OTCase family.

It is found in the cytoplasm. It catalyses the reaction carbamoyl phosphate + L-ornithine = L-citrulline + phosphate + H(+). The protein operates within amino-acid biosynthesis; L-arginine biosynthesis; L-arginine from L-ornithine and carbamoyl phosphate: step 1/3. Reversibly catalyzes the transfer of the carbamoyl group from carbamoyl phosphate (CP) to the N(epsilon) atom of ornithine (ORN) to produce L-citrulline. The protein is Ornithine carbamoyltransferase of Yersinia pestis bv. Antiqua (strain Nepal516).